The chain runs to 319 residues: Ciliary microtubule inner protein 2A (319 aa).

Belongs to the CIMIP2 family. In terms of assembly, microtubule inner protein component of sperm flagellar doublet microtubules.

It is found in the cytoplasm. It localises to the cytoskeleton. The protein localises to the flagellum axoneme. Microtubule inner protein (MIP) part of the dynein-decorated doublet microtubules (DMTs) in flagellum axoneme. Binds to the intra-tubulin interfaces. The polypeptide is Ciliary microtubule inner protein 2A (Cimip2a) (Mus musculus (Mouse)).